The primary structure comprises 342 residues: uncharacterized protein (342 aa).

Belongs to the proline racemase family.

This is an uncharacterized protein from Brucella canis (strain ATCC 23365 / NCTC 10854 / RM-666).